The following is a 162-amino-acid chain: Nucleotide-binding protein SCO4614 (162 aa).

This sequence belongs to the YajQ family.

Its subcellular location is the cytoplasm. The protein localises to the nucleoid. In terms of biological role, nucleotide-binding protein. This is Nucleotide-binding protein SCO4614 from Streptomyces coelicolor (strain ATCC BAA-471 / A3(2) / M145).